We begin with the raw amino-acid sequence, 292 residues long: 4-hydroxy-tetrahydrodipicolinate synthase (292 aa).

Thr46 contacts pyruvate. Tyr134 (proton donor/acceptor) is an active-site residue. Lys162 acts as the Schiff-base intermediate with substrate in catalysis. Ile204 is a pyruvate binding site.

It belongs to the DapA family. In terms of assembly, homotetramer; dimer of dimers.

The protein localises to the cytoplasm. It catalyses the reaction L-aspartate 4-semialdehyde + pyruvate = (2S,4S)-4-hydroxy-2,3,4,5-tetrahydrodipicolinate + H2O + H(+). It participates in amino-acid biosynthesis; L-lysine biosynthesis via DAP pathway; (S)-tetrahydrodipicolinate from L-aspartate: step 3/4. Its function is as follows. Catalyzes the condensation of (S)-aspartate-beta-semialdehyde [(S)-ASA] and pyruvate to 4-hydroxy-tetrahydrodipicolinate (HTPA). The polypeptide is 4-hydroxy-tetrahydrodipicolinate synthase (Moorella thermoacetica (strain ATCC 39073 / JCM 9320)).